A 406-amino-acid chain; its full sequence is Gustatory receptor for sugar taste 64b (406 aa).

Over 1–47 (MPQGETFHRAVSNVLFISQIYGLLPVSNVRALDVADIRFRWCSPRIL) the chain is Cytoplasmic. A helical membrane pass occupies residues 48–68 (YSLLIGILNLSEFGAVINYVI). Over 69-79 (KVTINFHTSST) the chain is Extracellular. The chain crosses the membrane as a helical span at residues 80 to 100 (LSLYIVCLLEHLFFWRLAIQW). Residues 101-130 (PRIMRTWHGVEQLFLRVPYRFYGEYRIKRR) are Cytoplasmic-facing. A helical transmembrane segment spans residues 131 to 151 (IYIVFTIVMSSALVEHCLLLG). The Extracellular segment spans residues 152 to 183 (NSFHLSNMERTQCKINVTYFESIYKWERPHLY). A glycan (N-linked (GlcNAc...) asparagine) is linked at asparagine 167. Residues 184–204 (MILPYHFWMLPILEWVNQTIA) traverse the membrane as a helical segment. At 205 to 265 (YPRSFTDCFI…KRLVHLLDAA (61 aa)) the chain is on the cytoplasmic side. The chain crosses the membrane as a helical span at residues 266–286 (IAPLVLLAFGNNMSFICFQLF). Residues 287–290 (NSFK) lie on the Extracellular side of the membrane. The chain crosses the membrane as a helical span at residues 291-311 (NIGVDFLVMLAFWYSLGFAVV). Topologically, residues 312–370 (RTLLTIFVASSINDYERKIVTALRDVPSRAWSIEVQRFSEQLGNDTTALSGSGFFYLTR) are cytoplasmic. Residues 371–391 (SLVLAMGTTIITYELMISDVI) form a helical membrane-spanning segment. Residues 392-406 (NQGSIRQKTQYCREY) lie on the Extracellular side of the membrane.

Belongs to the insect chemoreceptor superfamily. Gustatory receptor (GR) family. Gr5a subfamily. Expressed in Gr5a-expressing sugar-sensing cells.

It is found in the cell membrane. One of the few identified sugar gustatory receptors identified so far and which promotes the starvation-induced increase of feeding motivation. The sequence is that of Gustatory receptor for sugar taste 64b (Gr64b) from Drosophila melanogaster (Fruit fly).